We begin with the raw amino-acid sequence, 581 residues long: Arginine--tRNA ligase (581 aa).

Positions Pro122–His132 match the 'HIGH' region motif.

The protein belongs to the class-I aminoacyl-tRNA synthetase family. Monomer.

The protein localises to the cytoplasm. The enzyme catalyses tRNA(Arg) + L-arginine + ATP = L-arginyl-tRNA(Arg) + AMP + diphosphate. The chain is Arginine--tRNA ligase from Francisella tularensis subsp. novicida (strain U112).